We begin with the raw amino-acid sequence, 540 residues long: Phosphoenolpyruvate carboxykinase (ATP) (540 aa).

R65 provides a ligand contact to substrate. K87 is subject to N6-acetyllysine. Substrate is bound by residues Y207 and K213. ATP contacts are provided by residues K213, H232, and 248–256 (GLSGTGKTT). The Mn(2+) site is built by K213 and H232. A Mn(2+)-binding site is contributed by D269. ATP-binding positions include E297, R333, 449-450 (RI), and T455. Position 333 (R333) interacts with substrate. K523 is modified (N6-acetyllysine).

The protein belongs to the phosphoenolpyruvate carboxykinase (ATP) family. As to quaternary structure, monomer. Mn(2+) serves as cofactor.

It localises to the cytoplasm. It catalyses the reaction oxaloacetate + ATP = phosphoenolpyruvate + ADP + CO2. It functions in the pathway carbohydrate biosynthesis; gluconeogenesis. Functionally, involved in the gluconeogenesis. Catalyzes the conversion of oxaloacetate (OAA) to phosphoenolpyruvate (PEP) through direct phosphoryl transfer between the nucleoside triphosphate and OAA. In Shigella flexneri, this protein is Phosphoenolpyruvate carboxykinase (ATP).